We begin with the raw amino-acid sequence, 416 residues long: Multifunctional CCA protein (416 aa).

Glycine 8 and arginine 11 together coordinate ATP. CTP is bound by residues glycine 8 and arginine 11. Aspartate 21 and aspartate 23 together coordinate Mg(2+). ATP contacts are provided by arginine 91, arginine 138, and arginine 141. CTP contacts are provided by arginine 91, arginine 138, and arginine 141. Residues 229 to 331 (TGLHQELVSD…YELLQRCDAF (103 aa)) form the HD domain.

Belongs to the tRNA nucleotidyltransferase/poly(A) polymerase family. Bacterial CCA-adding enzyme type 1 subfamily. As to quaternary structure, monomer. Can also form homodimers and oligomers. Mg(2+) serves as cofactor. Requires Ni(2+) as cofactor.

It catalyses the reaction a tRNA precursor + 2 CTP + ATP = a tRNA with a 3' CCA end + 3 diphosphate. The enzyme catalyses a tRNA with a 3' CCA end + 2 CTP + ATP = a tRNA with a 3' CCACCA end + 3 diphosphate. Catalyzes the addition and repair of the essential 3'-terminal CCA sequence in tRNAs without using a nucleic acid template. Adds these three nucleotides in the order of C, C, and A to the tRNA nucleotide-73, using CTP and ATP as substrates and producing inorganic pyrophosphate. tRNA 3'-terminal CCA addition is required both for tRNA processing and repair. Also involved in tRNA surveillance by mediating tandem CCA addition to generate a CCACCA at the 3' terminus of unstable tRNAs. While stable tRNAs receive only 3'-terminal CCA, unstable tRNAs are marked with CCACCA and rapidly degraded. In Xylella fastidiosa (strain M23), this protein is Multifunctional CCA protein.